A 241-amino-acid polypeptide reads, in one-letter code: GPI-anchored hemophore RBT5 (241 aa).

Residues 1-20 (MLALSLLSIVSIASAAGVTA) form the signal peptide. In terms of domain architecture, CFEM spans 26–137 (NPYTIFPSVA…DALAKAADAA (112 aa)). Intrachain disulfides connect Cys-54–Cys-94, Cys-58–Cys-89, Cys-68–Cys-75, and Cys-77–Cys-110. Asp-72 contributes to the heme binding site. Low complexity-rich tracts occupy residues 140–154 (TTAESTTAESTAAET) and 163–182 (KETTAAETSKAAESSAPAET). Positions 140 to 210 (TTAESTTAES…SVAQSSSSAA (71 aa)) are disordered. Residues 183–199 (SKAEETSKAAETTKAEE) show a composition bias toward basic and acidic residues. A compositionally biased stretch (low complexity) spans 200-210 (SSVAQSSSSAA). A lipid anchor (GPI-anchor amidated asparagine) is attached at Asn-221. A propeptide spans 222 to 241 (AGNMPAVAIGGVIAAVAALF) (removed in mature form).

It belongs to the RBT5 family. In terms of assembly, interacts with PGA7. Post-translationally, the GPI-anchor is attached to the protein in the endoplasmic reticulum and serves to target the protein to the cell surface. There, the glucosamine-inositol phospholipid moiety is cleaved off and the GPI-modified mannoprotein is covalently attached via its lipidless GPI glycan remnant to the 1,6-beta-glucan of the outer cell wall layer. In terms of processing, mannosylated.

The protein localises to the secreted. Its subcellular location is the cell wall. The protein resides in the cell membrane. Its function is as follows. GPI-linked hyphal surface heme-binding protein involved in heme-iron utilization. Heme transfer occurs between PGA7, RBT5 and CSA2 supporting a model in which the 3 CFEM proteins cooperate in a heme-acquisition system and form a cross-cell wall heme-transfer cascade. The ability to acquire iron from host tissues is a major virulence factor of pathogenic microorganisms. Required for biofilm formation. The chain is GPI-anchored hemophore RBT5 from Candida albicans (strain SC5314 / ATCC MYA-2876) (Yeast).